Here is a 193-residue protein sequence, read N- to C-terminus: uncharacterized protein (193 aa).

Disordered stretches follow at residues 1–67 (MSGP…GPRS) and 110–160 (QRTP…LPGS). Low complexity-rich tracts occupy residues 50 to 64 (GPQRGPRNAAAARPG) and 148 to 160 (AGASPGSRLLPGS).

This is an uncharacterized protein from Homo sapiens (Human).